Consider the following 537-residue polypeptide: Cytochrome P450 27C1 (537 aa).

Cys-483 contributes to the heme binding site.

The protein belongs to the cytochrome P450 family. Requires heme as cofactor. Expressed in the dorsal third of retinal pigment epithelium, but not in the ventral counterpart (at protein level).

It is found in the membrane. The catalysed reaction is all-trans-retinol + 2 reduced [adrenodoxin] + O2 + 2 H(+) = all-trans-3,4-didehydroretinol + 2 oxidized [adrenodoxin] + 2 H2O. Efficiently catalyzes the conversion of all-trans retinol (also called vitamin A1, the precursor of 11-cis retinal) to 3,4-didehydroretinol (also called vitamin A2, the precursor of 11-cis 3,4-didehydroretinal), also acts on all-trans retinal and all-trans retinoic acid. The replacement of 11-cis retinal chromophore in photopigments with 11-cis 3,4-didehydroretinal enhances sensitivity to long-wavelength light. This may improve vision in fresh water which is often turbid. This is Cytochrome P450 27C1 (cyp27c1) from Aquarana catesbeiana (American bullfrog).